The sequence spans 259 residues: Protein SODIUM POTASSIUM ROOT DEFECTIVE 2 (259 aa).

A disordered region spans residues 141-165 (PDSITGSVDQDPAKTVEAEAPAGED). Residues 151-165 (DPAKTVEAEAPAGED) show a composition bias toward basic and acidic residues. One can recognise an HMA domain in the interval 180-246 (QQVVVLKVSL…KVKNAQFWTN (67 aa)). A metal cation is bound by residues cysteine 191 and cysteine 194.

The polypeptide is Protein SODIUM POTASSIUM ROOT DEFECTIVE 2 (Arabidopsis thaliana (Mouse-ear cress)).